The chain runs to 306 residues: MNWITNYVRPKINSILRRREIPDNLWIKDPTSGEMVFHKDLEVNQYVIPNSGYHMRISAKNRLMHFFDDGIYTPLENPKVVIDPLKFRDEKRYIDRLKDYRSKLGVDDNILSAQGTIEGLPIVATVQDFAFMGGSLGMASGEAIIKAFDTAIANKCPLVLFSASGGARMQEGTLSLMQMPRTTVAIEMMKEAKLPYIVVLTNPTTGGVTASYAMLGDIHIAEPGAMIGFAGPRVIQQTIRETLPEGFQSSEYLLEHGMIDMVVSRLEMKATIARLLRLIMKCPPAVNPSNPSPTDSQPPLSKAEAA.

A CoA carboxyltransferase N-terminal domain is found at 25–294 (LWIKDPTSGE…AVNPSNPSPT (270 aa)). The interval 286–306 (VNPSNPSPTDSQPPLSKAEAA) is disordered. Residues 287–299 (NPSNPSPTDSQPP) are compositionally biased toward polar residues.

This sequence belongs to the AccD/PCCB family. Acetyl-CoA carboxylase is a heterohexamer composed of biotin carboxyl carrier protein (AccB), biotin carboxylase (AccC) and two subunits each of ACCase subunit alpha (AccA) and ACCase subunit beta (AccD).

It is found in the cytoplasm. It carries out the reaction N(6)-carboxybiotinyl-L-lysyl-[protein] + acetyl-CoA = N(6)-biotinyl-L-lysyl-[protein] + malonyl-CoA. The protein operates within lipid metabolism; malonyl-CoA biosynthesis; malonyl-CoA from acetyl-CoA: step 1/1. Its function is as follows. Component of the acetyl coenzyme A carboxylase (ACC) complex. Biotin carboxylase (BC) catalyzes the carboxylation of biotin on its carrier protein (BCCP) and then the CO(2) group is transferred by the transcarboxylase to acetyl-CoA to form malonyl-CoA. This chain is Acetyl-coenzyme A carboxylase carboxyl transferase subunit beta, found in Bartonella quintana (strain Toulouse) (Rochalimaea quintana).